The sequence spans 337 residues: Geranylgeranyl pyrophosphate synthase subD (337 aa).

Isopentenyl diphosphate is bound by residues K53, R56, and H85. Mg(2+) contacts are provided by D92 and D96. R101 is a binding site for dimethylallyl diphosphate. Isopentenyl diphosphate is bound at residue R102. Residues K179, T180, and Q219 each coordinate dimethylallyl diphosphate. D222 lines the Mg(2+) pocket. N226, K236, and K246 together coordinate dimethylallyl diphosphate.

Belongs to the FPP/GGPP synthase family. Mg(2+) serves as cofactor.

It carries out the reaction isopentenyl diphosphate + dimethylallyl diphosphate = (2E)-geranyl diphosphate + diphosphate. The enzyme catalyses isopentenyl diphosphate + (2E)-geranyl diphosphate = (2E,6E)-farnesyl diphosphate + diphosphate. It catalyses the reaction isopentenyl diphosphate + (2E,6E)-farnesyl diphosphate = (2E,6E,10E)-geranylgeranyl diphosphate + diphosphate. The protein operates within secondary metabolite biosynthesis; terpenoid biosynthesis. Functionally, geranylgeranyl pyrophosphate synthase; part of the gene cluster that mediates the biosynthesis of the immunosuppressants subglutinols, meroterpenoids consisting of an alpha-pyrone (4-hydroxy-5,6-dimethyl-2-pyrone) moiety attached to a decalin core fused to a five-membered cyclic ether carrying a prenylside chain. The first step of the pathway is the synthesis of the alpha-pyrone moiety by the polyketide synthase subA via condensation of one acetyl-CoA starter unit with 3 malonyl-CoA units and 2 methylations. The alpha-pyrone is then combined with geranylgeranyl pyrophosphate (GGPP) formed by the GGPP synthase subD through the action of the prenyltransferase subC to yield a linear alpha-pyrone diterpenoid. Subsequent steps in the subglutinol biosynthetic pathway involve the decalin core formation, which is thought to be initiated by the epoxidation of the C10-C11 olefin by the FAD-dependent oxidoreductase subE. The following cyclization cascade would be catalyzed by the terpene cyclase subB. Lastly, the FAD-dependent dehydrogenase subF probably catalyzes the five-membered cyclic ether formation to complete the formation of subglutinol A. Subsequent redox reactions appear to give rise to subglutinol C and D, however, it remains unclear which enzymes are responsible for these transformations. SubD may have secondary function in the conversion of the identified subglutinols to subglutinol analog 45, which seems to be the major product of the cluster. This is Geranylgeranyl pyrophosphate synthase subD from Metarhizium robertsii (strain ARSEF 23 / ATCC MYA-3075) (Metarhizium anisopliae (strain ARSEF 23)).